Reading from the N-terminus, the 862-residue chain is Valine--tRNA ligase (862 aa).

The short motif at 47–57 (PTASGSLHIGH) is the 'HIGH' region element. Positions 110-130 (EPGLTPPFEGGDNKSSKAADQ) are disordered. Residues 120 to 129 (GDNKSSKAAD) show a composition bias toward basic and acidic residues. The 'KMSKS' region signature appears at 584–588 (KMSKS). An ATP-binding site is contributed by K587.

The protein belongs to the class-I aminoacyl-tRNA synthetase family. ValS type 2 subfamily. Monomer.

Its subcellular location is the cytoplasm. It catalyses the reaction tRNA(Val) + L-valine + ATP = L-valyl-tRNA(Val) + AMP + diphosphate. Functionally, catalyzes the attachment of valine to tRNA(Val). As ValRS can inadvertently accommodate and process structurally similar amino acids such as threonine, to avoid such errors, it has a 'posttransfer' editing activity that hydrolyzes mischarged Thr-tRNA(Val) in a tRNA-dependent manner. The chain is Valine--tRNA ligase from Leifsonia xyli subsp. xyli (strain CTCB07).